The following is a 664-amino-acid chain: Intraflagellar transport protein 70B (664 aa).

7 TPR repeats span residues 11–44 (DGEFTAVVYRLIRDARYAEAVQLLGGELQRSPRS), 45–78 (RAGLSLLGYCYYRLQEFALAAECYEQLGQLHPEL), 153–186 (LDGQVNLGCLLYKEGHYEAACSKFSAALQASGYR), 188–220 (DLSYNLALAYYSSRHYALALKHIADIIEHGIRQ), 385–418 (LTEQLRKLTIQVQEARHNKDDEAVKKAVNEYEDT), 423–456 (IPVLMAQAKIYWNLENYPMVEKLFRKSVEFCNDH), and 458–491 (VWKLNVAHVLFMQENKYKEAIGFYEPIVKKHYDN). The stretch at 509–532 (MISQNEEAEELMRKIGKEEEQLSY) forms a coiled coil. One copy of the TPR 8 repeat lies at 543-576 (CIVNLVIGTLYCAKGNYDFGISRVIKSLEPCNKK).

The protein belongs to the TTC30/dfy-1/fleer family. As to quaternary structure, interacts with the IFT B complex components IFT27, IFT46, IFT74, IFT52, IFT57, IFT80, IFT81 and IFT88. Interacts with KIF17.

It is found in the cell projection. It localises to the cilium. Its function is as follows. Required for polyglutamylation of axonemal tubulin. Plays a role in anterograde intraflagellar transport (IFT), the process by which cilia precursors are transported from the base of the cilium to the site of their incorporation at the tip. The sequence is that of Intraflagellar transport protein 70B (IFT70B) from Bos taurus (Bovine).